We begin with the raw amino-acid sequence, 255 residues long: 6-phosphogluconolactonase 4 (255 aa).

This sequence belongs to the glucosamine/galactosamine-6-phosphate isomerase family. 6-phosphogluconolactonase subfamily.

Its subcellular location is the cytoplasm. The enzyme catalyses 6-phospho-D-glucono-1,5-lactone + H2O = 6-phospho-D-gluconate + H(+). It functions in the pathway carbohydrate degradation; pentose phosphate pathway; D-ribulose 5-phosphate from D-glucose 6-phosphate (oxidative stage): step 2/3. Involved in the pentose phosphate pathway via hydrolysis of 6-phosphogluconolactone to 6-phosphogluconate. This Saccharomyces cerevisiae (strain ATCC 204508 / S288c) (Baker's yeast) protein is 6-phosphogluconolactonase 4.